Consider the following 390-residue polypeptide: MVDFEYSIPTRIFFGKDKINVLGRELKKYGSKVLIVYGGGSIKRNGIYDKAVSILEKNSIKFYELAGVEPNPRVTTVEKGVKICRENGVEVVLAIGGGSAIDCAKVIAAACEYDGNPWDIVLDGSKIKRVLPIASILTIAATGSEMDTWAVINNMDTNEKLIAAHPDMAPKFSILDPTYTYTVPTNQTAAGTADIMSHIFEVYFSNTKTAYLQDRMAEALLRTCIKYGGIALEKPDDYEARANLMWASSLAINGLLTYGKDTNWSVHLMEHELSAYYDITHGVGLAILTPNWMEYILNNDTVYKFVEYGVNVWGIDKEKNHYDIAHQAIQKTRDYFVNVLGLPSRLRDVGIEEEKLDIMAKESVKLTGGTIGNLRPVNASEVLQIFKKSV.

Belongs to the iron-containing alcohol dehydrogenase family. In terms of assembly, homodimer.

The protein operates within alcohol metabolism; butanol biosynthesis. The polypeptide is NADH-dependent butanol dehydrogenase B (bdhB) (Clostridium acetobutylicum (strain ATCC 824 / DSM 792 / JCM 1419 / IAM 19013 / LMG 5710 / NBRC 13948 / NRRL B-527 / VKM B-1787 / 2291 / W)).